The primary structure comprises 439 residues: tRNA-2-methylthio-N(6)-dimethylallyladenosine synthase (439 aa).

The 118-residue stretch at 2-119 (KYIYIKTWGC…LPKMIDEVEK (118 aa)) folds into the MTTase N-terminal domain. Positions 11, 48, 82, 156, 160, and 163 each coordinate [4Fe-4S] cluster. Positions 142-374 (KKKGYTADIS…QERINIQTML (233 aa)) constitute a Radical SAM core domain. A TRAM domain is found at 377–439 (RKMFGSIQSV…HTHSLKGELF (63 aa)).

Belongs to the methylthiotransferase family. MiaB subfamily. In terms of assembly, monomer. The cofactor is [4Fe-4S] cluster.

It localises to the cytoplasm. The catalysed reaction is N(6)-dimethylallyladenosine(37) in tRNA + (sulfur carrier)-SH + AH2 + 2 S-adenosyl-L-methionine = 2-methylsulfanyl-N(6)-dimethylallyladenosine(37) in tRNA + (sulfur carrier)-H + 5'-deoxyadenosine + L-methionine + A + S-adenosyl-L-homocysteine + 2 H(+). Functionally, catalyzes the methylthiolation of N6-(dimethylallyl)adenosine (i(6)A), leading to the formation of 2-methylthio-N6-(dimethylallyl)adenosine (ms(2)i(6)A) at position 37 in tRNAs that read codons beginning with uridine. The polypeptide is tRNA-2-methylthio-N(6)-dimethylallyladenosine synthase (Buchnera aphidicola subsp. Acyrthosiphon pisum (strain APS) (Acyrthosiphon pisum symbiotic bacterium)).